Reading from the N-terminus, the 243-residue chain is Biosynthetic peptidoglycan transglycosylase (243 aa).

Residues 22 to 42 traverse the membrane as a helical segment; that stretch reads LIVLLVLALMSVLQVIVFRFV.

Belongs to the glycosyltransferase 51 family.

The protein localises to the cell inner membrane. The enzyme catalyses [GlcNAc-(1-&gt;4)-Mur2Ac(oyl-L-Ala-gamma-D-Glu-L-Lys-D-Ala-D-Ala)](n)-di-trans,octa-cis-undecaprenyl diphosphate + beta-D-GlcNAc-(1-&gt;4)-Mur2Ac(oyl-L-Ala-gamma-D-Glu-L-Lys-D-Ala-D-Ala)-di-trans,octa-cis-undecaprenyl diphosphate = [GlcNAc-(1-&gt;4)-Mur2Ac(oyl-L-Ala-gamma-D-Glu-L-Lys-D-Ala-D-Ala)](n+1)-di-trans,octa-cis-undecaprenyl diphosphate + di-trans,octa-cis-undecaprenyl diphosphate + H(+). It functions in the pathway cell wall biogenesis; peptidoglycan biosynthesis. Functionally, peptidoglycan polymerase that catalyzes glycan chain elongation from lipid-linked precursors. This chain is Biosynthetic peptidoglycan transglycosylase, found in Xylella fastidiosa (strain 9a5c).